The sequence spans 379 residues: Probable 3-phenylpropionic acid transporter (379 aa).

At 1–4 the chain is on the cytoplasmic side; it reads MVLQ. A helical transmembrane segment spans residues 5–31; the sequence is STRWLALGYFTYFFSYGIFLPFWSVWL. Residues 32-37 lie on the Periplasmic side of the membrane; it reads KGIGLT. A helical membrane pass occupies residues 38–66; that stretch reads PETIGLLLGAGLVARFLGSLLIAPRVSDP. The Cytoplasmic portion of the chain corresponds to 67–70; the sequence is SRLI. The chain crosses the membrane as a helical span at residues 71-96; it reads SALRVLALLTLLFAVAFWAGAHVAWL. Residues 97–100 are Periplasmic-facing; it reads MLVM. The chain crosses the membrane as a helical span at residues 101 to 118; it reads IGFNLFFSPLVPLTDALA. The Cytoplasmic segment spans residues 119 to 129; the sequence is NTWQKQFPLDY. Residues 130 to 152 traverse the membrane as a helical segment; it reads GKVRLWGSVAFVIGSALTGKLVT. Over 153–155 the chain is Periplasmic; that stretch reads MFD. Residues 156–175 form a helical membrane-spanning segment; that stretch reads YRVILALLTLGVASMLLGFL. Topologically, residues 176–207 are cytoplasmic; the sequence is IRPTIQPQGASRQQESTGWSAWLALVRQNWRF. The helical transmembrane segment at 208 to 227 threads the bilayer; it reads LACVCLLQGAHAAYYGFSAI. Over 228 to 231 the chain is Periplasmic; the sequence is YWQA. Residues 232–256 form a helical membrane-spanning segment; it reads AGYSASAVGYLWSLGVVAEVIIFAL. At 257–266 the chain is on the cytoplasmic side; that stretch reads SNKLFRRCSA. A helical membrane pass occupies residues 267–286; sequence RDMLLISAICGVVRWGIMGA. Residues 287 to 289 lie on the Periplasmic side of the membrane; sequence TTA. Residues 290–312 traverse the membrane as a helical segment; the sequence is LPWLIVVQILHCGTFTVCHLAAM. The Cytoplasmic portion of the chain corresponds to 313–323; that stretch reads RYIAARQGSEV. Residues 324–351 form a helical membrane-spanning segment; that stretch reads IRLQAVYSAVAMGGSIAIMTVFAGFLYQ. Residues 352–354 are Periplasmic-facing; sequence YLG. A helical transmembrane segment spans residues 355–375; it reads HGVFWVMALVALPAMFLRPKV. The Cytoplasmic portion of the chain corresponds to 376–379; the sequence is VPSC.

It belongs to the major facilitator superfamily. Phenyl propionate permease (PPP) (TC 2.A.1.27) family.

The protein resides in the cell inner membrane. Probable permease involved in the uptake of 3-phenylpropionic acid. In Escherichia coli (strain K12), this protein is Probable 3-phenylpropionic acid transporter (hcaT).